We begin with the raw amino-acid sequence, 682 residues long: Zinc finger protein 16 (682 aa).

2 stretches are compositionally biased toward basic and acidic residues: residues M1–E10 and V113–R125. Disordered stretches follow at residues M1 to D33 and D112 to G134. A necessary for transcription activation region spans residues Y62–I210. The C2H2-type 1; degenerate zinc finger occupies L209–H231. Residues F237–H259 form a C2H2-type 2; degenerate zinc finger. Residue K253 forms a Glycyl lysine isopeptide (Lys-Gly) (interchain with G-Cter in SUMO2) linkage. C2H2-type zinc fingers lie at residues Y265 to H287, Y293 to H315, Y321 to H343, Y349 to H371, F377 to H399, Y405 to H427, Y433 to H455, and H461 to H483. Required for nuclear localization stretches follow at residues S268–R393 and R341–G373. The segment at S473–A503 is required for nuclear localization. K487 is modified (N6-acetyllysine). 7 C2H2-type zinc fingers span residues Y489–H511, Y517–H539, Y545–H567, H573–H595, Y601–H623, Y629–H651, and Y657–H679.

This sequence belongs to the krueppel C2H2-type zinc-finger protein family. In terms of assembly, interacts with INCA1; the interaction inhibits INCA1 activity and induces the cell cycle process.

It is found in the nucleus. Functionally, acts as a transcriptional activator. Promotes cell proliferation by facilitating the cell cycle phase transition from the S to G2/M phase. Involved in both the hemin- and phorbol myristate acetate (PMA)-induced erythroid and megakaryocytic differentiation, respectively. Also plays a role as an inhibitor of cell apoptosis. The sequence is that of Zinc finger protein 16 (ZNF16) from Gorilla gorilla gorilla (Western lowland gorilla).